The primary structure comprises 515 residues: ATP synthase subunit alpha (515 aa).

ATP is bound at residue G171 to T178.

Belongs to the ATPase alpha/beta chains family. In terms of assembly, F-type ATPases have 2 components, CF(1) - the catalytic core - and CF(0) - the membrane proton channel. CF(1) has five subunits: alpha(3), beta(3), gamma(1), delta(1), epsilon(1). CF(0) has three main subunits: a(1), b(2) and c(9-12). The alpha and beta chains form an alternating ring which encloses part of the gamma chain. CF(1) is attached to CF(0) by a central stalk formed by the gamma and epsilon chains, while a peripheral stalk is formed by the delta and b chains.

It localises to the cell inner membrane. The catalysed reaction is ATP + H2O + 4 H(+)(in) = ADP + phosphate + 5 H(+)(out). Functionally, produces ATP from ADP in the presence of a proton gradient across the membrane. The alpha chain is a regulatory subunit. The protein is ATP synthase subunit alpha of Stenotrophomonas maltophilia (strain R551-3).